Here is a 344-residue protein sequence, read N- to C-terminus: Serpentine receptor class alpha-27 (344 aa).

7 helical membrane-spanning segments follow: residues 28–48, 67–87, 128–148, 157–177, 203–223, 252–272, and 287–307; these read SIWMKINFVFVFILIFLTFYL, QILLMITLLNANLNQLIFLEI, GLLSALTFDRFFALYASTVYV, MLITVSIIVTVIVHIRTYGGV, AIFWIIMANCVLTIAVLLLNI, ICSVTSTQFVFLSFSTAALAI, and INIQYINGGVYGNLSIPVLIY.

The protein belongs to the nematode receptor-like protein sra family.

It is found in the membrane. This chain is Serpentine receptor class alpha-27 (sra-27), found in Caenorhabditis elegans.